The chain runs to 184 residues: MNWRSKRIWIELITGSRKISNFCWAFILFLGSLGFLLVGISSYLGRNLISLFPPQQILFFPQGIVMSFYGIAGLFISSYLWCTISWNVGSGYDRFDRKEGIVCIFRWGFPGKNRRIFLRFLIKDIQSIRIELKEGIYTRRVLYLEIRGQGAIPLTRTDDNLTPREIEQKAAELAYFLRIPIEVF.

2 helical membrane-spanning segments follow: residues 21–43 (NFCW…ISSY) and 58–80 (LFFP…SSYL).

It belongs to the Ycf4 family.

The protein localises to the plastid. It is found in the chloroplast thylakoid membrane. Seems to be required for the assembly of the photosystem I complex. The polypeptide is Photosystem I assembly protein Ycf4 (Carpobrotus chilensis (Sea fig)).